The following is a 708-amino-acid chain: Polyribonucleotide nucleotidyltransferase (708 aa).

Aspartate 490 and aspartate 496 together coordinate Mg(2+). Residues 557 to 619 (PRIETMTIPK…KSIDDAIRLI (63 aa)) enclose the KH domain. Residues 629–699 (GEVYKGKVRS…KTGKFKLSRK (71 aa)) form the S1 motif domain.

It belongs to the polyribonucleotide nucleotidyltransferase family. The cofactor is Mg(2+).

The protein resides in the cytoplasm. The catalysed reaction is RNA(n+1) + phosphate = RNA(n) + a ribonucleoside 5'-diphosphate. Involved in mRNA degradation. Catalyzes the phosphorolysis of single-stranded polyribonucleotides processively in the 3'- to 5'-direction. In Bacteroides fragilis (strain ATCC 25285 / DSM 2151 / CCUG 4856 / JCM 11019 / LMG 10263 / NCTC 9343 / Onslow / VPI 2553 / EN-2), this protein is Polyribonucleotide nucleotidyltransferase.